Reading from the N-terminus, the 97-residue chain is NELL2-interacting cell ontogeny regulator 1 (97 aa).

A signal peptide spans 1–35 (MAPLPPCGPPRSPPPRLLLLLLLLSATLLGAPARA).

Belongs to the NICOL family. Interacts with NELL2; triggers epididymal differentiation. Interacts with cell surface receptor TFRC; the interaction mediates uptake of NICOL1 into fibroblasts.

The protein localises to the secreted. It is found in the cytoplasm. It localises to the perinuclear region. Functionally, mRNA-binding protein which interacts with a range of target mRNAs including SERPINE1, ACTA2, CCN2 and COL4A1 and may promote extracellular matrix production. Binds to the 3'-UTR of SERPINE1 mRNA and stabilizes the mRNA, possibly by competing for binding with SERBP1 and preventing SERBP1-mediated mRNA degradation. Also binds to the 3'-UTR of ACTA2. Testis-derived lumicrine factor that triggers epididymal differentiation and sperm maturation. The polypeptide is NELL2-interacting cell ontogeny regulator 1 (Bos taurus (Bovine)).